A 225-amino-acid chain; its full sequence is Transcription factor MYB1 (225 aa).

2 consecutive HTH myb-type domains span residues 11-67 (LGRV…KPSI) and 68-118 (KRGH…YKKH). 2 DNA-binding regions (H-T-H motif) span residues 39–63 (WKRV…LNYL) and 91–114 (WSLI…NTHL).

No interactions with bHLH.

It localises to the nucleus. Its function is as follows. Activates DODA1 and CYP76AD1 in the betalain red pigment pathway. This chain is Transcription factor MYB1, found in Beta vulgaris (Sugar beet).